The chain runs to 347 residues: UDP-N-acetylenolpyruvoylglucosamine reductase (347 aa).

The 172-residue stretch at 16–187 (AIEQCSHYLV…IAVGLKLPKT (172 aa)) folds into the FAD-binding PCMH-type domain. Arginine 163 is a catalytic residue. Serine 233 functions as the Proton donor in the catalytic mechanism. Glutamate 328 is an active-site residue.

This sequence belongs to the MurB family. It depends on FAD as a cofactor.

It is found in the cytoplasm. The catalysed reaction is UDP-N-acetyl-alpha-D-muramate + NADP(+) = UDP-N-acetyl-3-O-(1-carboxyvinyl)-alpha-D-glucosamine + NADPH + H(+). The protein operates within cell wall biogenesis; peptidoglycan biosynthesis. Cell wall formation. The sequence is that of UDP-N-acetylenolpyruvoylglucosamine reductase from Vibrio vulnificus (strain YJ016).